We begin with the raw amino-acid sequence, 437 residues long: ATP-dependent protease ATPase subunit HslU (437 aa).

ATP-binding positions include Ile-18, Gly-60–Glu-65, Asp-250, Glu-315, and Arg-387.

It belongs to the ClpX chaperone family. HslU subfamily. A double ring-shaped homohexamer of HslV is capped on each side by a ring-shaped HslU homohexamer. The assembly of the HslU/HslV complex is dependent on binding of ATP.

It localises to the cytoplasm. Functionally, ATPase subunit of a proteasome-like degradation complex; this subunit has chaperone activity. The binding of ATP and its subsequent hydrolysis by HslU are essential for unfolding of protein substrates subsequently hydrolyzed by HslV. HslU recognizes the N-terminal part of its protein substrates and unfolds these before they are guided to HslV for hydrolysis. The sequence is that of ATP-dependent protease ATPase subunit HslU from Dinoroseobacter shibae (strain DSM 16493 / NCIMB 14021 / DFL 12).